Reading from the N-terminus, the 355-residue chain is MNTLFMHCRPGFEGEVCAEISEHAARLGVAGYAKGKPQSACAEFVCAEAEGAERLMAQLRFAQLIFPRQWARGSYIELPETDRISVLLEHLAALPVFGSLWLEVLDSNDGKELSTFCRKFEVPLRKALEKAGRLVDNASLPRLLLTFISGRRVFVGVAEANNSALWPMGIPRLKFPREAPSRSTLKLEEAWHQFIPREQWEQRLGDDMTGVDLGASPGGWTYQLVRRGMLVTAIDNGPMAESLMDTGLVQHLMADGFTWQPKQPVDWMVCDIVEKPARTTSLIETWLGEGLCREAVVNLKLPMKQRYAEVRRLLDRMEATFKARKLKVSIACKQLYHDREEVTCHLRRLDLKPRK.

S-adenosyl-L-methionine contacts are provided by residues Ser-183, 216–219 (SPGG), Asp-235, Asp-255, and Asp-271. Catalysis depends on Lys-300, which acts as the Proton acceptor.

This sequence belongs to the class I-like SAM-binding methyltransferase superfamily. RNA methyltransferase RlmE family. RlmM subfamily. Monomer.

Its subcellular location is the cytoplasm. The catalysed reaction is cytidine(2498) in 23S rRNA + S-adenosyl-L-methionine = 2'-O-methylcytidine(2498) in 23S rRNA + S-adenosyl-L-homocysteine + H(+). Its function is as follows. Catalyzes the 2'-O-methylation at nucleotide C2498 in 23S rRNA. The sequence is that of Ribosomal RNA large subunit methyltransferase M from Pseudomonas putida (strain W619).